Reading from the N-terminus, the 193-residue chain is Large ribosomal subunit protein eL19A (193 aa).

The disordered stretch occupies residues 156 to 179 (QEQQDARRARAKAARQRRAKAVEE). A compositionally biased stretch (basic residues) spans 164 to 174 (ARAKAARQRRA).

Belongs to the eukaryotic ribosomal protein eL19 family. As to quaternary structure, component of the large ribosomal subunit (LSU). Mature yeast ribosomes consist of a small (40S) and a large (60S) subunit. The 40S small subunit contains 1 molecule of ribosomal RNA (18S rRNA) and at least 33 different proteins. The large 60S subunit contains 3 rRNA molecules (25S, 5.8S and 5S rRNA) and at least 46 different proteins. eL19 lies in close proximity to the binding site for eukaryotic initiation factor eIF4G.

The protein resides in the cytoplasm. Functionally, component of the ribosome, a large ribonucleoprotein complex responsible for the synthesis of proteins in the cell. The small ribosomal subunit (SSU) binds messenger RNAs (mRNAs) and translates the encoded message by selecting cognate aminoacyl-transfer RNA (tRNA) molecules. The large subunit (LSU) contains the ribosomal catalytic site termed the peptidyl transferase center (PTC), which catalyzes the formation of peptide bonds, thereby polymerizing the amino acids delivered by tRNAs into a polypeptide chain. The nascent polypeptides leave the ribosome through a tunnel in the LSU and interact with protein factors that function in enzymatic processing, targeting, and the membrane insertion of nascent chains at the exit of the ribosomal tunnel. eL19 may play a role in the last stages of translation initiation, in particular subunit joining and shedding/releasing factors. This is Large ribosomal subunit protein eL19A (rpl1901) from Schizosaccharomyces pombe (strain 972 / ATCC 24843) (Fission yeast).